A 226-amino-acid chain; its full sequence is Uracil-DNA glycosylase (226 aa).

The Proton acceptor role is filled by Asp-64.

The protein belongs to the uracil-DNA glycosylase (UDG) superfamily. UNG family.

Its subcellular location is the cytoplasm. It carries out the reaction Hydrolyzes single-stranded DNA or mismatched double-stranded DNA and polynucleotides, releasing free uracil.. Excises uracil residues from the DNA which can arise as a result of misincorporation of dUMP residues by DNA polymerase or due to deamination of cytosine. This Vibrio campbellii (strain ATCC BAA-1116) protein is Uracil-DNA glycosylase.